Here is a 256-residue protein sequence, read N- to C-terminus: MSEKRVEKKLIHYVKKALNDYRMINTGDRVMVCLSGGKDSYTLLSLLNSIRIEGNYKFDIFAFVLDQSQPGWDDSALRGWLDDKKIPYEILTRDTYSIVKEKIPAGKTYCSLCSRLRRGIIYRYAEEQGFSKIALGHHRDDLIQTLLMSVFYNGQIRSMPPKLLSDNKRHVLIRPLAYCQERDIIKYAMEQQFPLIPCNLCDSQKNLMRQRVKRLISDLAKENPKVPSNMLRALSNIKPSQLMDHELWNFRELNVD.

A PP-loop motif motif is present at residues 35 to 40 (SGGKDS). Cysteine 110, cysteine 113, and cysteine 201 together coordinate [4Fe-4S] cluster.

The protein belongs to the TtcA family. As to quaternary structure, homodimer. It depends on Mg(2+) as a cofactor. [4Fe-4S] cluster is required as a cofactor.

The protein localises to the cytoplasm. The catalysed reaction is cytidine(32) in tRNA + S-sulfanyl-L-cysteinyl-[cysteine desulfurase] + AH2 + ATP = 2-thiocytidine(32) in tRNA + L-cysteinyl-[cysteine desulfurase] + A + AMP + diphosphate + H(+). It functions in the pathway tRNA modification. Functionally, catalyzes the ATP-dependent 2-thiolation of cytidine in position 32 of tRNA, to form 2-thiocytidine (s(2)C32). The sulfur atoms are provided by the cysteine/cysteine desulfurase (IscS) system. The protein is tRNA-cytidine(32) 2-sulfurtransferase of Coxiella burnetii (strain RSA 493 / Nine Mile phase I).